The chain runs to 380 residues: Cytochrome b (380 aa).

Transmembrane regions (helical) follow at residues 33-53 (FGSL…FLAM), 77-98 (WLIR…FLHV), 113-133 (WNMG…GYVL), and 178-198 (FFAF…VHLL). Heme b-binding residues include histidine 83 and histidine 97. Positions 182 and 196 each coordinate heme b. Residue histidine 201 participates in a ubiquinone binding. Helical transmembrane passes span 226–246 (IKDF…VLFF), 288–308 (LGGV…PLLH), 320–340 (ITQT…WIGG), and 347–367 (FIMI…IFMP).

It belongs to the cytochrome b family. In terms of assembly, the cytochrome bc1 complex contains 11 subunits: 3 respiratory subunits (MT-CYB, CYC1 and UQCRFS1), 2 core proteins (UQCRC1 and UQCRC2) and 6 low-molecular weight proteins (UQCRH/QCR6, UQCRB/QCR7, UQCRQ/QCR8, UQCR10/QCR9, UQCR11/QCR10 and a cleavage product of UQCRFS1). This cytochrome bc1 complex then forms a dimer. Requires heme b as cofactor.

The protein localises to the mitochondrion inner membrane. Component of the ubiquinol-cytochrome c reductase complex (complex III or cytochrome b-c1 complex) that is part of the mitochondrial respiratory chain. The b-c1 complex mediates electron transfer from ubiquinol to cytochrome c. Contributes to the generation of a proton gradient across the mitochondrial membrane that is then used for ATP synthesis. This chain is Cytochrome b (MT-CYB), found in Chionomys roberti (Robert's snow vole).